Reading from the N-terminus, the 429-residue chain is MATEQRPFHLVVFGASGFTGQFVTEEVAREQIASEQSSRLPWAVAGRSKEKLQQVLEKAAQKLGRPSLSSEVGVIICDISNPASLDEMAKQAKLVLNCVGPYRFYGEPVVKACIENGTSCIDICGEPQFLELMHAKYHEKAAEKGVYIIGSSGFDSIPADLGVLYTRNQMNGTLTAVESFLTINTGPEGLCIHDGTWKSAIYGFGDKGSLRKLRSVSCLKPVPIVGTKLKRRWPVSYCRELNSYSIPFLGSDISVVKRTQRYLHENLEDSPVQYAAYVTVGGITSVIKLMFAGLFFLFFVKFSIGRQLLIKFPWLFSFGYFSKQGPTQKQMDETSFTMTFFGQGYSHGTCVEKNKPNIRICTQVKGPEAGYVATPIAMVQAAMTFLSDASDLPKGGGVFTPGAAFSRTKLIDRLNKHGIEFSVISSSEV.

N-acetylalanine is present on alanine 2. A phosphoserine mark is found at serine 209, serine 215, and serine 217.

The protein belongs to the saccharopine dehydrogenase family.

In Mus musculus (Mouse), this protein is Saccharopine dehydrogenase-like oxidoreductase (Sccpdh).